The chain runs to 488 residues: Dipeptide and tripeptide permease A (488 aa).

Residues 1-35 (MSTANTPEDEQKPSLNAFKQPRAFYLIFSIELWER) lie on the Cytoplasmic side of the membrane. A helical membrane pass occupies residues 36-56 (FGYYGLQGIMAVYLVKMLGMS). The Periplasmic segment spans residues 57–60 (EAEA). The helical transmembrane segment at 61 to 81 (ITVFAAFTALVYGFVAIGGWL) threads the bilayer. Residues 82-90 (GDKILGTKR) are Cytoplasmic-facing. A helical membrane pass occupies residues 91–111 (VIVLGAIVLAIGYAMVAFSDH). At 112–114 (DKD) the chain is on the periplasmic side. The chain crosses the membrane as a helical span at residues 115–135 (MIYWGLATIAVGNGLFKANPS). The Cytoplasmic segment spans residues 136-154 (SLLATCYEKDDPQLDGAFT). A helical transmembrane segment spans residues 155–175 (MYYMSINVGSFLSMLATPWLA). Residues 176–179 (ANYG) lie on the Periplasmic side of the membrane. Residues 180 to 200 (WDVAFALSVVGMLITLANFML) form a helical membrane-spanning segment. The Cytoplasmic segment spans residues 201-219 (CRGWIKDKGSRPDFEPLNY). Residues 220–240 (LKLLLTLVGIVALTAVSTWLL) form a helical membrane-spanning segment. H241 is a topological domain (periplasmic). Residues 242 to 262 (NNEVATWSLAIISLGIILIFA) form a helical membrane-spanning segment. Residues 263–275 (RETFMMKGVARRK) lie on the Cytoplasmic side of the membrane. Residues 276-296 (MIVAFLLMVEAVVFFVLYDQM) traverse the membrane as a helical segment. Over 297–324 (PTSLNFFAIHNVEHAILGFSVEPEQFQS) the chain is Periplasmic. Residues 325-345 (LNPFWIMLASPLLAAIYNFMG) traverse the membrane as a helical segment. The Cytoplasmic portion of the chain corresponds to 346–353 (DKLPMPYK). The chain crosses the membrane as a helical span at residues 354–374 (FTVGMFLSATAFLVLPLGASM). Residues 375-391 (ANEAGIVSSWWLVASYG) are Periplasmic-facing. Residues 392 to 412 (FQSIGELMISGLGLAMVAQLV) traverse the membrane as a helical segment. Over 413–415 (PQR) the chain is Cytoplasmic. A helical transmembrane segment spans residues 416-436 (LMGFIMGAWFLTSAAAAIIAG). At 437-460 (KVASLMAVPEDVQNAHASLEIYSS) the chain is on the periplasmic side. The chain crosses the membrane as a helical span at residues 461-481 (VFLQIGIVTGVIALLMLFTAP). The Cytoplasmic segment spans residues 482-488 (MLSKMTQ).

It belongs to the major facilitator superfamily. Proton-dependent oligopeptide transporter (POT/PTR) (TC 2.A.17) family. DtpA subfamily.

The protein localises to the cell inner membrane. Proton-dependent permease that transports di- and tripeptides. The chain is Dipeptide and tripeptide permease A from Proteus mirabilis (strain HI4320).